The following is a 487-amino-acid chain: Zinc finger and BTB domain-containing protein 32 (487 aa).

Residues 29–87 (CDTLITVGGQEFPAHSLVLAGVSQQLGRRGQWALGEGISPSTFAQLLNFVYGESVELQP) form the BTB domain. Residues 113 to 166 (RGDRAKKPDPGLKKHQEEPEKPSRNAERELGDPGEKQKPEQVSRTGGREQEMLH) show a composition bias toward basic and acidic residues. Disordered regions lie at residues 113–208 (RGDR…ADGK) and 308–371 (QNQL…ARSR). Positions 308–320 (QNQLASSSPTPGS) are enriched in polar residues. The segment covering 357–369 (PPRPHPPPAPPAR) has biased composition (pro residues). 3 C2H2-type zinc fingers span residues 373 to 395 (YACS…YRVH), 401 to 423 (FSCS…LRTH), and 428 to 450 (YRXX…MRGH). The disordered stretch occupies residues 468–487 (SSSRPSRPSTSPCCPSSSTT).

This sequence belongs to the krueppel C2H2-type zinc-finger protein family. As to quaternary structure, homodimer (via PTB domain). Interacts with the N-terminal of FANCC. Interacts with ZBTB16. Interacts with GATA3.

It is found in the nucleus. Functionally, DNA-binding protein that binds to the to a 5'-TGTACAGTGT-3' core sequence. May function as a transcriptional transactivator and transcriptional repressor. Probably exerts its repressor effect by preventing GATA3 from binding to DNA. May play a role in regulating the differentiation and activation of helper T-cells. In Pan troglodytes (Chimpanzee), this protein is Zinc finger and BTB domain-containing protein 32 (ZBTB32).